Here is a 282-residue protein sequence, read N- to C-terminus: Purine nucleoside phosphorylase (282 aa).

Residues Ser-46, His-78, and Arg-103–His-105 each bind phosphate. Residue Glu-204 is part of the active site. Glu-204 is a binding site for a purine D-ribonucleoside. Ser-223 is a phosphate binding site. Asn-246 contributes to the a purine D-ribonucleoside binding site.

This sequence belongs to the PNP/MTAP phosphorylase family. As to quaternary structure, homotrimer.

The enzyme catalyses a purine 2'-deoxy-D-ribonucleoside + phosphate = a purine nucleobase + 2-deoxy-alpha-D-ribose 1-phosphate. It participates in purine metabolism; purine nucleoside salvage. Its function is as follows. The purine nucleoside phosphorylases catalyze the phosphorolytic breakdown of the N-glycosidic bond in the beta-(deoxy)ribonucleoside molecules, with the formation of the corresponding free purine bases and pentose-1-phosphate. Cleaves guanosine, inosine, 2'-deoxyguanosine and 2'-deoxyinosine. This is Purine nucleoside phosphorylase (punA) from Cellulomonas sp.